A 299-amino-acid polypeptide reads, in one-letter code: Bifunctional protein FolD 2 (299 aa).

NADP(+)-binding positions include 168 to 170 (GRS), Ser193, and Ile234.

Belongs to the tetrahydrofolate dehydrogenase/cyclohydrolase family. In terms of assembly, homodimer.

It carries out the reaction (6R)-5,10-methylene-5,6,7,8-tetrahydrofolate + NADP(+) = (6R)-5,10-methenyltetrahydrofolate + NADPH. It catalyses the reaction (6R)-5,10-methenyltetrahydrofolate + H2O = (6R)-10-formyltetrahydrofolate + H(+). Its pathway is one-carbon metabolism; tetrahydrofolate interconversion. Catalyzes the oxidation of 5,10-methylenetetrahydrofolate to 5,10-methenyltetrahydrofolate and then the hydrolysis of 5,10-methenyltetrahydrofolate to 10-formyltetrahydrofolate. The chain is Bifunctional protein FolD 2 from Rhizobium meliloti (strain 1021) (Ensifer meliloti).